The sequence spans 283 residues: Bifunctional protein FolD (283 aa).

Residues 165–167 (GRS), S190, and I231 contribute to the NADP(+) site.

Belongs to the tetrahydrofolate dehydrogenase/cyclohydrolase family. As to quaternary structure, homodimer.

The catalysed reaction is (6R)-5,10-methylene-5,6,7,8-tetrahydrofolate + NADP(+) = (6R)-5,10-methenyltetrahydrofolate + NADPH. It carries out the reaction (6R)-5,10-methenyltetrahydrofolate + H2O = (6R)-10-formyltetrahydrofolate + H(+). Its pathway is one-carbon metabolism; tetrahydrofolate interconversion. Its function is as follows. Catalyzes the oxidation of 5,10-methylenetetrahydrofolate to 5,10-methenyltetrahydrofolate and then the hydrolysis of 5,10-methenyltetrahydrofolate to 10-formyltetrahydrofolate. This chain is Bifunctional protein FolD, found in Herminiimonas arsenicoxydans.